Reading from the N-terminus, the 396-residue chain is ATP-dependent RNA helicase FAL1 (396 aa).

Positions 23-51 match the Q motif motif; sequence PTFEALNLKEDLLRGIYAYNFEKPSAIQQ. Residues 54 to 224 form the Helicase ATP-binding domain; the sequence is IIPIIRGRDV…TKFMTDPVRI (171 aa). An ATP-binding site is contributed by 67–74; it reads AQSGTGKT. The DEAD box motif lies at 172-175; it reads DESD. In terms of domain architecture, Helicase C-terminal spans 235–396; it reads GIKQFFVAVE…EMPMNVAELT (162 aa).

It belongs to the DEAD box helicase family. DDX48/FAL1 subfamily.

Its subcellular location is the nucleus. It is found in the nucleolus. It carries out the reaction ATP + H2O = ADP + phosphate + H(+). Functionally, ATP-dependent RNA helicase involved in 40S ribosomal subunit biogenesis. Required for the processing and cleavage of 35S pre-rRNA at sites A0, A1, and A2, leading to mature 18S rRNA. The polypeptide is ATP-dependent RNA helicase FAL1 (FAL1) (Cryptococcus neoformans var. neoformans serotype D (strain B-3501A) (Filobasidiella neoformans)).